The chain runs to 448 residues: Probable glycine dehydrogenase (decarboxylating) subunit 1 (448 aa).

The protein belongs to the GcvP family. N-terminal subunit subfamily. The glycine cleavage system is composed of four proteins: P, T, L and H. In this organism, the P 'protein' is a heterodimer of two subunits.

The enzyme catalyses N(6)-[(R)-lipoyl]-L-lysyl-[glycine-cleavage complex H protein] + glycine + H(+) = N(6)-[(R)-S(8)-aminomethyldihydrolipoyl]-L-lysyl-[glycine-cleavage complex H protein] + CO2. Its function is as follows. The glycine cleavage system catalyzes the degradation of glycine. The P protein binds the alpha-amino group of glycine through its pyridoxal phosphate cofactor; CO(2) is released and the remaining methylamine moiety is then transferred to the lipoamide cofactor of the H protein. In Lysinibacillus sphaericus (strain C3-41), this protein is Probable glycine dehydrogenase (decarboxylating) subunit 1.